The primary structure comprises 154 residues: CASP-like protein 5B2 (154 aa).

Residues 1–17 are Cytoplasmic-facing; it reads MAGLAGRPGSWGGLVLR. Residues 18–38 traverse the membrane as a helical segment; it reads VGQALFAAACIGVMGSSLGFA. The Extracellular segment spans residues 39 to 42; sequence SYTA. The chain crosses the membrane as a helical span at residues 43–63; it reads FCYLIASMGLQMLWSFGLACL. Topologically, residues 64 to 87 are cytoplasmic; the sequence is DGYAIRANKDLTSPILLSLFVVGD. Residues 88–107 form a helical membrane-spanning segment; it reads WVTAILSFAASSSAAGVVIL. Over 108–130 the chain is Extracellular; that stretch reads FQKDVLFCRRYPQLPCGKYELAT. The helical transmembrane segment at 131–151 threads the bilayer; that stretch reads AFAFLSWALSATSALIMFWLL. The Cytoplasmic segment spans residues 152 to 154; sequence AAF.

This sequence belongs to the Casparian strip membrane proteins (CASP) family. Homodimer and heterodimers.

The protein resides in the cell membrane. The chain is CASP-like protein 5B2 from Zea mays (Maize).